A 448-amino-acid chain; its full sequence is MKSYEVNFDGLVGPTHNYGGLSYGNVASQSNSQQSSNPKEAALQGLQKMKALMDMGFVQGVLAPQERPDVAALRNLGFSGTDAQVIQQAAKHAMPLLVASCSASSMWVANAATVSPSADTADGRVHFTAANLNCKYHRSIEHPTTSRVLGAMFADQKHFAHHAALPAVAQFGDEGAANHTRFCRDYGEAGVEFFVYGRSAFDTRYPAPQKYPARQTLEASQAVARLHGLQDDGVVYAQQNPAVIDAGVFHNDVIAVGNGEVLFYHEDAFLNTEQMLGELHGKLGKLGGHFQSVCVPRAQVSVEDAVRSYLFNSQLLSRADGSMLLIVPEECRANERVWQYLQGLTASGGLIREVKVFDLKQSMQNGGGPACLRLRVALNETELAAVNPGVIMTAPLYDTLTQWVDKHYRDSLRETDLADPQLLLECRTALDELTQILKLGSVYPFQIN.

Substrate-binding positions include 19-28 (GGLSYGNVAS), N110, and 137-138 (HR). E174 is an active-site residue. R214 contributes to the substrate binding site. Residue H250 is part of the active site. Substrate contacts are provided by D252 and N365. The active-site Nucleophile is the C371.

It belongs to the succinylarginine dihydrolase family. In terms of assembly, homodimer.

It catalyses the reaction N(2)-succinyl-L-arginine + 2 H2O + 2 H(+) = N(2)-succinyl-L-ornithine + 2 NH4(+) + CO2. The protein operates within amino-acid degradation; L-arginine degradation via AST pathway; L-glutamate and succinate from L-arginine: step 2/5. Functionally, catalyzes the hydrolysis of N(2)-succinylarginine into N(2)-succinylornithine, ammonia and CO(2). The polypeptide is N-succinylarginine dihydrolase (Pseudomonas fluorescens (strain SBW25)).